Here is a 156-residue protein sequence, read N- to C-terminus: Rhombotin-1 (156 aa).

LIM zinc-binding domains are found at residues 22–84 and 86–148; these read KGCA…LFGT and GNCA…GQLN.

As to expression, expressed in the brain and not in the thymus.

It localises to the nucleus. Its function is as follows. May be involved in gene regulation within neural lineage cells potentially by direct DNA binding or by binding to other transcription factors. The chain is Rhombotin-1 (LMO1) from Bos taurus (Bovine).